A 297-amino-acid chain; its full sequence is Iron/alpha-ketoglutarate-dependent dioxygenase ausU (297 aa).

Residues His-130, Asp-132, and His-206 each contribute to the Fe cation site.

This sequence belongs to the PhyH family. Homodimer. Fe cation is required as a cofactor.

Its pathway is secondary metabolite biosynthesis; terpenoid biosynthesis. In terms of biological role, iron/alpha-ketoglutarate-dependent dioxygenase; part of the gene cluster that mediates the biosynthesis of calidodehydroaustin, a fungal meroterpenoid. The first step of the pathway is the synthesis of 3,5-dimethylorsellinic acid by the polyketide synthase ausA. 3,5-dimethylorsellinic acid is then prenylated by the polyprenyl transferase ausN. Further epoxidation by the FAD-dependent monooxygenase ausM and cyclization by the probable terpene cyclase ausL lead to the formation of protoaustinoid A. Protoaustinoid A is then oxidized to spiro-lactone preaustinoid A3 by the combined action of the FAD-binding monooxygenases ausB and ausC, and the dioxygenase ausE. Acid-catalyzed keto-rearrangement and ring contraction of the tetraketide portion of preaustinoid A3 by ausJ lead to the formation of preaustinoid A4. The aldo-keto reductase ausK, with the help of ausH, is involved in the next step by transforming preaustinoid A4 into isoaustinone which is in turn hydroxylated by the P450 monooxygenase ausI to form austinolide. The cytochrome P450 monooxygenase ausG modifies austinolide to austinol. Austinol is further acetylated to austin by the O-acetyltransferase ausP, which spontaneously changes to dehydroaustin. The cytochrome P450 monooxygenase ausR then converts dehydroaustin is into 7-dehydrodehydroaustin. The hydroxylation catalyzed by ausR permits the O-acetyltransferase ausQ to add an additional acetyl group to the molecule, leading to the formation of acetoxydehydroaustin. The short chain dehydrogenase ausT catalyzes the reduction of the double bond present between carbon atoms 1 and 2 to convert 7-dehydrodehydroaustin into 1,2-dihydro-7-hydroxydehydroaustin. AusQ catalyzes not only an acetylation reaction but also the addition of the PKS ausV diketide product to 1,2-dihydro-7-hydroxydehydroaustin, forming precalidodehydroaustin. Finally, the iron/alpha-ketoglutarate-dependent dioxygenase converts precalidodehydroaustin into calidodehydroaustin. This Aspergillus calidoustus protein is Iron/alpha-ketoglutarate-dependent dioxygenase ausU.